Consider the following 403-residue polypeptide: Argininosuccinate synthase (403 aa).

ATP is bound by residues alanine 13 to serine 21 and alanine 40. Positions 91 and 96 each coordinate L-citrulline. Glycine 121 serves as a coordination point for ATP. Threonine 123, asparagine 127, and aspartate 128 together coordinate L-aspartate. Asparagine 127 serves as a coordination point for L-citrulline. Residues arginine 131, serine 180, serine 189, glutamate 265, and tyrosine 277 each coordinate L-citrulline.

It belongs to the argininosuccinate synthase family. Type 1 subfamily. As to quaternary structure, homotetramer.

The protein resides in the cytoplasm. The enzyme catalyses L-citrulline + L-aspartate + ATP = 2-(N(omega)-L-arginino)succinate + AMP + diphosphate + H(+). It functions in the pathway amino-acid biosynthesis; L-arginine biosynthesis; L-arginine from L-ornithine and carbamoyl phosphate: step 2/3. The chain is Argininosuccinate synthase from Leptospira borgpetersenii serovar Hardjo-bovis (strain JB197).